The sequence spans 220 residues: Ribosomal RNA small subunit methyltransferase Nep1 (220 aa).

S-adenosyl-L-methionine contacts are provided by residues G178, G183, and 196–201 (LYREPL).

It belongs to the class IV-like SAM-binding methyltransferase superfamily. RNA methyltransferase NEP1 family. In terms of assembly, homodimer.

The enzyme catalyses a pseudouridine in rRNA + S-adenosyl-L-methionine = an N(1)-methylpseudouridine in rRNA + S-adenosyl-L-homocysteine + H(+). Its function is as follows. Methyltransferase involved in ribosomal biogenesis. Specifically catalyzes the N1-methylation of the pseudouridine corresponding to position 914 in M.jannaschii 16S rRNA. The protein is Ribosomal RNA small subunit methyltransferase Nep1 of Thermococcus kodakarensis (strain ATCC BAA-918 / JCM 12380 / KOD1) (Pyrococcus kodakaraensis (strain KOD1)).